The chain runs to 380 residues: Ceramide synthase 2 (380 aa).

At 1 to 40 the chain is on the lumenal side; that stretch reads MLQTLYDYFWWERLWLPVNLTWADLEDKDGRVYAKASDLY. N-linked (GlcNAc...) asparagine glycosylation is present at Asn-19. The helical transmembrane segment at 41–61 threads the bilayer; the sequence is ITLPLALLFLVIRYFFELYVA. The tract at residues 67–128 is homeobox-like; that stretch reads LLNVKEKTRL…RRRRNQDRPS (62 aa). The TLC domain occupies 131–332; sequence KKFREASWRF…ILRMAHKFIT (202 aa). 4 helical membrane passes run 140–160, 175–195, 209–229, and 264–284; these read FTYY…KPWF, IIPS…SLLF, QIIH…ANYV, and LFIV…PFWI. The Last loop motif signature appears at 291–300; the sequence is YPLELYPAFF. The chain crosses the membrane as a helical span at residues 304–324; sequence FFNFMMAVLQMLHIFWAYFIL. Over 325-380 the chain is Cytoplasmic; sequence RMAHKFITGKLIEDERSDREETESSEGEETAAGAGAKSRLLANGHPILNNNHPKND. The interval 340–380 is disordered; that stretch reads RSDREETESSEGEETAAGAGAKSRLLANGHPILNNNHPKND. Ser-341 carries the post-translational modification Phosphoserine. Positions 344 to 353 are enriched in acidic residues; it reads EETESSEGEE. Thr-346 carries the post-translational modification Phosphothreonine. Ser-348 and Ser-349 each carry phosphoserine.

In terms of assembly, interacts with ATP6V0C, ASGR1, ASGR2 and SLC22A1/OCT1. Interacts with ELOV1, HSD17B12 and TECR. Interacts with NDUFS2. Interacts with PAQR4; the interaction regulates the stability and activity of CERS2 and is inhibited in presence of ceramides. Acetylated. Deacetylation by SIRT3 increases enzyme activity and promotes mitochondrial ceramide accumulation. Post-translationally, phosphorylated at the C-terminus by CK2, leading to increase the ceramide synthase activity. As to expression, broadly expressed, with highest levels in liver and kidney. In brain is detected in neurons, oligodentrocytes, ependymal cells and epithelial cells of the choroid plexus. In kidney is detected in collecting ducts and to a lesser degree in proximal tubules.

It is found in the endoplasmic reticulum membrane. The catalysed reaction is a very long-chain fatty acyl-CoA + a sphingoid base = an N-(very-long-chain fatty acyl)-sphingoid base + CoA + H(+). It catalyses the reaction docosanoyl-CoA + sphinganine = N-docosanoylsphinganine + CoA + H(+). It carries out the reaction tetracosanoyl-CoA + sphinganine = N-tetracosanoylsphinganine + CoA + H(+). The enzyme catalyses hexacosanoyl-CoA + sphinganine = N-hexacosanoylsphinganine + CoA + H(+). The catalysed reaction is (15Z)-tetracosenoyl-CoA + sphinganine = N-(15Z-tetracosenoyl)-sphinganine + CoA + H(+). It catalyses the reaction 2-hydroxytetracosanoyl-CoA + sphinganine = N-(2-hydroxytetracosanoyl)-sphinganine + CoA + H(+). It carries out the reaction 2-hydroxydocosanoyl-CoA + sphinganine = N-(2-hydroxydocosanoyl)-sphinganine + CoA + H(+). The enzyme catalyses 2-hydroxytetracosenoyl-CoA + sphinganine = N-(2-hydroxytetracosenoyl)-sphinganine + CoA + H(+). The catalysed reaction is tetracosenoyl-CoA + sphinganine = an N-tetracosenoylsphinganine + CoA + H(+). It catalyses the reaction hexacosenoyl-CoA + sphinganine = N-hexacosenoylsphinganine + CoA + H(+). It carries out the reaction tetracosanoyl-CoA + sphing-4-enine = N-tetracosanoyl-sphing-4-enine + CoA + H(+). The enzyme catalyses tetracosenoyl-CoA + sphing-4-enine = N-(tetracosenoyl)-sphing-4-enine + CoA + H(+). The catalysed reaction is heptadecasphing-4-enine + tetracosanoyl-CoA = N-tetracosanoyl-heptadecasphing-4-enine + CoA + H(+). It catalyses the reaction a fatty acyl-CoA + sphing-4-enine = an N-acylsphing-4-enine + CoA + H(+). It carries out the reaction sphing-4-enine + hexadecanoyl-CoA = N-hexadecanoylsphing-4-enine + CoA + H(+). The enzyme catalyses sphing-4-enine + octadecanoyl-CoA = N-octadecanoylsphing-4-enine + CoA + H(+). The catalysed reaction is eicosanoyl-CoA + sphing-4-enine = N-eicosanoyl-sphing-4-enine + CoA + H(+). It catalyses the reaction sphinganine + hexadecanoyl-CoA = N-hexadecanoylsphinganine + CoA + H(+). It carries out the reaction sphinganine + octadecanoyl-CoA = N-(octadecanoyl)-sphinganine + CoA + H(+). The enzyme catalyses sphinganine + (9Z)-octadecenoyl-CoA = N-(9Z-octadecenoyl)-sphinganine + CoA + H(+). The catalysed reaction is eicosanoyl-CoA + sphinganine = N-eicosanoylsphinganine + CoA + H(+). Its pathway is lipid metabolism; sphingolipid metabolism. Its activity is regulated as follows. Ceramide synthase activity is inhibited by sphingosine-1-phosphate. In terms of biological role, ceramide synthase that catalyzes the transfer of the acyl chain from acyl-CoA to a sphingoid base, with high selectivity toward very-long-chain fatty acyl-CoA (chain length C22-C27). N-acylates sphinganine and sphingosine bases to form dihydroceramides and ceramides in de novo synthesis and salvage pathways, respectively. Plays a non-redundant role in the synthesis of ceramides with very-long-chain fatty acids in kidney, liver and brain. Regulates the abundance of myelin-specific sphingolipids galactosylceramide and sulfatide that affects myelin sheath architecture and motor neuron functions. This is Ceramide synthase 2 from Mus musculus (Mouse).